The chain runs to 95 residues: Large ribosomal subunit protein bL25 (95 aa).

It belongs to the bacterial ribosomal protein bL25 family. As to quaternary structure, part of the 50S ribosomal subunit; part of the 5S rRNA/L5/L18/L25 subcomplex. Contacts the 5S rRNA. Binds to the 5S rRNA independently of L5 and L18.

This is one of the proteins that binds to the 5S RNA in the ribosome where it forms part of the central protuberance. The sequence is that of Large ribosomal subunit protein bL25 from Shewanella pealeana (strain ATCC 700345 / ANG-SQ1).